The sequence spans 282 residues: Nucleotide-binding protein XCV3122 (282 aa).

Gly-5–Ser-12 is a binding site for ATP. Asp-57 to Ser-60 is a GTP binding site.

Belongs to the RapZ-like family.

In terms of biological role, displays ATPase and GTPase activities. This chain is Nucleotide-binding protein XCV3122, found in Xanthomonas euvesicatoria pv. vesicatoria (strain 85-10) (Xanthomonas campestris pv. vesicatoria).